The primary structure comprises 331 residues: Thiamine thiazole synthase (331 aa).

Residues C86, 107-108, G115, and V183 each bind substrate; that span reads EA. C220 is subject to 2,3-didehydroalanine (Cys). Substrate is bound by residues D222, H237, M289, and 299–301; that span reads RMG.

It belongs to the THI4 family. Homooctamer. It depends on Fe cation as a cofactor. During the catalytic reaction, a sulfide is transferred from Cys-220 to a reaction intermediate, generating a dehydroalanine residue.

It is found in the cytoplasm. The protein localises to the nucleus. It carries out the reaction [ADP-thiazole synthase]-L-cysteine + glycine + NAD(+) = [ADP-thiazole synthase]-dehydroalanine + ADP-5-ethyl-4-methylthiazole-2-carboxylate + nicotinamide + 3 H2O + 2 H(+). Functionally, involved in biosynthesis of the thiamine precursor thiazole. Catalyzes the conversion of NAD and glycine to adenosine diphosphate 5-(2-hydroxyethyl)-4-methylthiazole-2-carboxylic acid (ADT), an adenylated thiazole intermediate. The reaction includes an iron-dependent sulfide transfer from a conserved cysteine residue of the protein to a thiazole intermediate. The enzyme can only undergo a single turnover, which suggests it is a suicide enzyme. May have additional roles in adaptation to various stress conditions and in DNA damage tolerance. This Emericella nidulans (strain FGSC A4 / ATCC 38163 / CBS 112.46 / NRRL 194 / M139) (Aspergillus nidulans) protein is Thiamine thiazole synthase.